Reading from the N-terminus, the 223-residue chain is Deoxyribose-phosphate aldolase (223 aa).

Catalysis depends on D89, which acts as the Proton donor/acceptor. The Schiff-base intermediate with acetaldehyde role is filled by K154. Residue K183 is the Proton donor/acceptor of the active site.

It belongs to the DeoC/FbaB aldolase family. DeoC type 1 subfamily.

The protein localises to the cytoplasm. It carries out the reaction 2-deoxy-D-ribose 5-phosphate = D-glyceraldehyde 3-phosphate + acetaldehyde. The protein operates within carbohydrate degradation; 2-deoxy-D-ribose 1-phosphate degradation; D-glyceraldehyde 3-phosphate and acetaldehyde from 2-deoxy-alpha-D-ribose 1-phosphate: step 2/2. In terms of biological role, catalyzes a reversible aldol reaction between acetaldehyde and D-glyceraldehyde 3-phosphate to generate 2-deoxy-D-ribose 5-phosphate. In Thermoanaerobacter sp. (strain X514), this protein is Deoxyribose-phosphate aldolase.